The primary structure comprises 317 residues: Lipoyl synthase (317 aa).

Positions 55, 60, 66, 81, 85, 88, and 292 each coordinate [4Fe-4S] cluster. Positions tryptophan 67–alanine 281 constitute a Radical SAM core domain.

The protein belongs to the radical SAM superfamily. Lipoyl synthase family. The cofactor is [4Fe-4S] cluster.

It localises to the cytoplasm. It carries out the reaction [[Fe-S] cluster scaffold protein carrying a second [4Fe-4S](2+) cluster] + N(6)-octanoyl-L-lysyl-[protein] + 2 oxidized [2Fe-2S]-[ferredoxin] + 2 S-adenosyl-L-methionine + 4 H(+) = [[Fe-S] cluster scaffold protein] + N(6)-[(R)-dihydrolipoyl]-L-lysyl-[protein] + 4 Fe(3+) + 2 hydrogen sulfide + 2 5'-deoxyadenosine + 2 L-methionine + 2 reduced [2Fe-2S]-[ferredoxin]. The protein operates within protein modification; protein lipoylation via endogenous pathway; protein N(6)-(lipoyl)lysine from octanoyl-[acyl-carrier-protein]: step 2/2. In terms of biological role, catalyzes the radical-mediated insertion of two sulfur atoms into the C-6 and C-8 positions of the octanoyl moiety bound to the lipoyl domains of lipoate-dependent enzymes, thereby converting the octanoylated domains into lipoylated derivatives. In Mycolicibacterium gilvum (strain PYR-GCK) (Mycobacterium gilvum (strain PYR-GCK)), this protein is Lipoyl synthase.